The following is a 445-amino-acid chain: Homoserine O-succinyltransferase (445 aa).

The AB hydrolase-1 domain occupies 45 to 411; it reads NAVLICHALS…APHGHDSFLF (367 aa). Residue S153 is the Nucleophile of the active site. R223 provides a ligand contact to substrate. Residues D373 and H406 contribute to the active site. D407 lines the substrate pocket.

This sequence belongs to the AB hydrolase superfamily. MetX family. As to quaternary structure, homodimer.

Its subcellular location is the cytoplasm. The catalysed reaction is L-homoserine + succinyl-CoA = O-succinyl-L-homoserine + CoA. The protein operates within amino-acid biosynthesis; L-methionine biosynthesis via de novo pathway; O-succinyl-L-homoserine from L-homoserine: step 1/1. In terms of biological role, transfers a succinyl group from succinyl-CoA to L-homoserine, forming succinyl-L-homoserine. The chain is Homoserine O-succinyltransferase from Psychrobacter arcticus (strain DSM 17307 / VKM B-2377 / 273-4).